Here is a 263-residue protein sequence, read N- to C-terminus: Isoprenyl transferase (263 aa).

The active site involves D26. D26 serves as a coordination point for Mg(2+). Substrate is bound by residues 27 to 30 (GNGR), W31, R39, H43, and 71 to 73 (SSE). N74 (proton acceptor) is an active-site residue. Residues W75, R77, R191, and 197–199 (RIS) each bind substrate. E210 provides a ligand contact to Mg(2+). Positions 241–263 (GRTSEQIAGQQENKNTVSNEDRV) are disordered. Positions 243–263 (TSEQIAGQQENKNTVSNEDRV) are enriched in polar residues.

It belongs to the UPP synthase family. Homodimer. Mg(2+) serves as cofactor.

Functionally, catalyzes the condensation of isopentenyl diphosphate (IPP) with allylic pyrophosphates generating different type of terpenoids. The sequence is that of Isoprenyl transferase from Nitrosomonas europaea (strain ATCC 19718 / CIP 103999 / KCTC 2705 / NBRC 14298).